The primary structure comprises 196 residues: tRNA(Phe) 7-((3-amino-3-carboxypropyl)-4-demethylwyosine(37)-N(4))-methyltransferase (196 aa).

It belongs to the TYW3 family.

The catalysed reaction is 4-demethyl-7-[(3S)-3-amino-3-carboxypropyl]wyosine(37) in tRNA(Phe) + S-adenosyl-L-methionine = 7-[(3S)-3-amino-3-carboxypropyl]wyosine(37) in tRNA(Phe) + S-adenosyl-L-homocysteine + H(+). Its function is as follows. S-adenosyl-L-methionine-dependent methyltransferase that acts as a component of the wyosine derivatives biosynthesis pathway. Probably methylates N-4 position of wybutosine-86 to produce wybutosine-72. The protein is tRNA(Phe) 7-((3-amino-3-carboxypropyl)-4-demethylwyosine(37)-N(4))-methyltransferase of Archaeoglobus fulgidus (strain ATCC 49558 / DSM 4304 / JCM 9628 / NBRC 100126 / VC-16).